Reading from the N-terminus, the 252-residue chain is Pyridoxine 5'-phosphate synthase (252 aa).

A 3-amino-2-oxopropyl phosphate-binding site is contributed by asparagine 7. Residue 9–10 (DH) participates in 1-deoxy-D-xylulose 5-phosphate binding. 3-amino-2-oxopropyl phosphate is bound at residue arginine 18. Histidine 43 acts as the Proton acceptor in catalysis. 1-deoxy-D-xylulose 5-phosphate contacts are provided by arginine 45 and histidine 50. Glutamate 70 (proton acceptor) is an active-site residue. A 1-deoxy-D-xylulose 5-phosphate-binding site is contributed by threonine 100. Histidine 190 (proton donor) is an active-site residue. 3-amino-2-oxopropyl phosphate is bound by residues glycine 191 and 212-213 (GH).

The protein belongs to the PNP synthase family. Homooctamer; tetramer of dimers.

It is found in the cytoplasm. The catalysed reaction is 3-amino-2-oxopropyl phosphate + 1-deoxy-D-xylulose 5-phosphate = pyridoxine 5'-phosphate + phosphate + 2 H2O + H(+). It participates in cofactor biosynthesis; pyridoxine 5'-phosphate biosynthesis; pyridoxine 5'-phosphate from D-erythrose 4-phosphate: step 5/5. Its function is as follows. Catalyzes the complicated ring closure reaction between the two acyclic compounds 1-deoxy-D-xylulose-5-phosphate (DXP) and 3-amino-2-oxopropyl phosphate (1-amino-acetone-3-phosphate or AAP) to form pyridoxine 5'-phosphate (PNP) and inorganic phosphate. The sequence is that of Pyridoxine 5'-phosphate synthase from Synechococcus sp. (strain RCC307).